Consider the following 413-residue polypeptide: MSGSVSPLAPKTFAEMPALRGVRMATAAAGIKYKNRTDVLMMLFDRPASVAGVFTRSKCPSAPVDHCRQNLPGGIARAVVVNSGNANAFTGKKGREATRLTAEAAAKAVGCSEAEVFLASTGVIGEPLDATKFAGVLDKLAASATQDFWFEAAKAIMTTDTYPKVATRSAEIGGVKVAINGIAKGAGMIAPDMATMLSFVVTDADIAPAALQALLQAGVEPTFNSVTVDSDTSTSDTLMLFATGAAAGDGQAKVEDAADPRLDGFRAALDDLLRDLALQVVRDGEGARKMVEVTVEGAENDAAAKRIALSIANSPLVKTAVAGEDANWGRVVMAVGKSGEMAERDRLAIWFGDIRVAVEGERDPAYSEAAATAVMQGETIPIRVDIGLGSGRATVYTCDLTKEYVEINGDYRS.

Substrate-binding residues include Thr-158, Lys-184, Thr-195, Glu-285, Asn-408, and Ser-413. Thr-195 functions as the Nucleophile in the catalytic mechanism.

This sequence belongs to the ArgJ family. Heterotetramer of two alpha and two beta chains.

It is found in the cytoplasm. It catalyses the reaction N(2)-acetyl-L-ornithine + L-glutamate = N-acetyl-L-glutamate + L-ornithine. The catalysed reaction is L-glutamate + acetyl-CoA = N-acetyl-L-glutamate + CoA + H(+). The protein operates within amino-acid biosynthesis; L-arginine biosynthesis; L-ornithine and N-acetyl-L-glutamate from L-glutamate and N(2)-acetyl-L-ornithine (cyclic): step 1/1. Its pathway is amino-acid biosynthesis; L-arginine biosynthesis; N(2)-acetyl-L-ornithine from L-glutamate: step 1/4. In terms of biological role, catalyzes two activities which are involved in the cyclic version of arginine biosynthesis: the synthesis of N-acetylglutamate from glutamate and acetyl-CoA as the acetyl donor, and of ornithine by transacetylation between N(2)-acetylornithine and glutamate. This chain is Arginine biosynthesis bifunctional protein ArgJ, found in Rhizobium meliloti (strain 1021) (Ensifer meliloti).